The following is a 484-amino-acid chain: tRNA sulfurtransferase (484 aa).

A THUMP domain is found at 63–167 (QAFGERLACI…GDKLYMVTKR (105 aa)). Residues 185 to 186 (LI), Lys-267, Gly-289, and Gln-298 each bind ATP. Cys-346 and Cys-458 form a disulfide bridge. One can recognise a Rhodanese domain in the interval 406-484 (IDTNEVVIDI…GYHNVKVYRP (79 aa)). The active-site Cysteine persulfide intermediate is the Cys-458.

The protein belongs to the ThiI family.

It localises to the cytoplasm. It carries out the reaction [ThiI sulfur-carrier protein]-S-sulfanyl-L-cysteine + a uridine in tRNA + 2 reduced [2Fe-2S]-[ferredoxin] + ATP + H(+) = [ThiI sulfur-carrier protein]-L-cysteine + a 4-thiouridine in tRNA + 2 oxidized [2Fe-2S]-[ferredoxin] + AMP + diphosphate. It catalyses the reaction [ThiS sulfur-carrier protein]-C-terminal Gly-Gly-AMP + S-sulfanyl-L-cysteinyl-[cysteine desulfurase] + AH2 = [ThiS sulfur-carrier protein]-C-terminal-Gly-aminoethanethioate + L-cysteinyl-[cysteine desulfurase] + A + AMP + 2 H(+). Its pathway is cofactor biosynthesis; thiamine diphosphate biosynthesis. Functionally, catalyzes the ATP-dependent transfer of a sulfur to tRNA to produce 4-thiouridine in position 8 of tRNAs, which functions as a near-UV photosensor. Also catalyzes the transfer of sulfur to the sulfur carrier protein ThiS, forming ThiS-thiocarboxylate. This is a step in the synthesis of thiazole, in the thiamine biosynthesis pathway. The sulfur is donated as persulfide by IscS. The polypeptide is tRNA sulfurtransferase (Shewanella sp. (strain MR-4)).